Consider the following 661-residue polypeptide: Acetyl-coenzyme A synthetase (661 aa).

CoA contacts are provided by residues 197-200 (RGGK) and Thr320. Residues 396–398 (GEP), 420–425 (DTWWQT), Asp511, and Arg526 contribute to the ATP site. Ser534 contributes to the CoA binding site. Position 537 (Arg537) interacts with ATP. Val548 and Val553 together coordinate Mg(2+). Lys620 is subject to N6-acetyllysine.

Belongs to the ATP-dependent AMP-binding enzyme family. It depends on Mg(2+) as a cofactor. Post-translationally, acetylated. Deacetylation by the SIR2-homolog deacetylase activates the enzyme.

The catalysed reaction is acetate + ATP + CoA = acetyl-CoA + AMP + diphosphate. Functionally, catalyzes the conversion of acetate into acetyl-CoA (AcCoA), an essential intermediate at the junction of anabolic and catabolic pathways. AcsA undergoes a two-step reaction. In the first half reaction, AcsA combines acetate with ATP to form acetyl-adenylate (AcAMP) intermediate. In the second half reaction, it can then transfer the acetyl group from AcAMP to the sulfhydryl group of CoA, forming the product AcCoA. This Leptospira interrogans serogroup Icterohaemorrhagiae serovar Lai (strain 56601) protein is Acetyl-coenzyme A synthetase.